The sequence spans 292 residues: Phosphoribulokinase, plasmid (292 aa).

12–20 is a binding site for ATP; sequence GSSGAGTTS.

This sequence belongs to the phosphoribulokinase family. In terms of assembly, homooctamer.

The catalysed reaction is D-ribulose 5-phosphate + ATP = D-ribulose 1,5-bisphosphate + ADP + H(+). The protein operates within carbohydrate biosynthesis; Calvin cycle. The sequence is that of Phosphoribulokinase, plasmid (cfxP) from Cupriavidus necator (strain ATCC 17699 / DSM 428 / KCTC 22496 / NCIMB 10442 / H16 / Stanier 337) (Ralstonia eutropha).